A 587-amino-acid chain; its full sequence is Kelch-like protein 3 (587 aa).

Residues 1 to 24 form a disordered region; that stretch reads MEGESVKPSPQPTAQAEDEEKNRR. In terms of domain architecture, BTB spans 50–117; that stretch reads CDVMIVAEDV…IYTAEIEVTE (68 aa). The BACK domain maps to 152 to 254; it reads CLGIRAFADV…PRDYLVQTVE (103 aa). Position 295 is a phosphothreonine (Thr-295). Kelch repeat units follow at residues 302–347, 348–394, 396–441, 442–490, 491–537, and 539–585; these read VMIV…FMAG, HVYA…VLND, LYAV…VVEG, KLYA…VLSG, QLYA…AVNG, and LYVV…VIHK. Phosphothreonine is present on Thr-375. Ser-376 and Ser-433 each carry phosphoserine.

It belongs to the KLHL3 family. As to quaternary structure, homodimer. Component of the BCR(KLHL3) E3 ubiquitin ligase complex, at least composed of CUL3 and KLHL3 and RBX1. Interacts with CLDN8. Post-translationally, phosphorylation at Ser-433 by PKA or PKC decreases the interaction with WNK1 and WNK4, leading to inhibit their degradation by the BCR(KLHL3) complex. Phosphorylated at Ser-433 by PKC in response to angiotensin II signaling, decreasing ability to promote degradation of WNK1 and WNK4, leading to activation of Na-Cl cotransporter SLC12A3/NCC. Phosphorylation at Ser-433 is increased by insulin. Dephosphorylated at Ser-433 by calcineurin PPP3CA, promoting degradation of WNK1 and WNK4. Present at high level in brain and kidney (at protein level). Weakly expressed in other tissues. In kidney, predominantly localizes to the distal convoluted tubule (DCT) and collecting duct, with apical localization in the DCT (at protein level).

It is found in the cytoplasm. Its subcellular location is the cytosol. The protein localises to the cytoskeleton. It participates in protein modification; protein ubiquitination. In terms of biological role, substrate-specific adapter of a BCR (BTB-CUL3-RBX1) E3 ubiquitin ligase complex that acts as a regulator of ion transport in the distal nephron. The BCR(KLHL3) complex acts by mediating ubiquitination and degradation of WNK1 and WNK4, two activators of Na-Cl cotransporter SLC12A3/NCC in distal convoluted tubule cells of kidney, thereby regulating NaCl reabsorption. The BCR(KLHL3) complex also mediates ubiquitination of CLDN8, a tight-junction protein required for paracellular chloride transport in the kidney, leading to its degradation. The polypeptide is Kelch-like protein 3 (Mus musculus (Mouse)).